The chain runs to 813 residues: MEEYNKAVEEFRKHEYPMLKDAVYLDHAGTTLYSKSLMERYMGDMMSNLYGNPHSASTSSQLSTSRIENTRLNVLQFFNADPEDFDVVFVANATAGIKLVMDAFRCQEDGFLYGYHQDSHTSLVGVREDAVSSRCLDDDAVECWLSGSEALVRNEHNSEIGLFAYPAQSNLDGRRLPLSWPERVRNLSYEAQANTYTLLDASALVSTSPLDLSDVSKAPDFTVLSFYKIFGFPDLGALIVRKDSGAILQTRKYFGGGTVEVVVCLKEQWHAPKGQSLHENLEDGTLPFHNIMALEAAIDVHKSLYGSMECIANHTTFLARKLYEGLKSLQHANSEPACIIYSPGFSETSSNVQGPTIAFNVKNSFGAWVTNVEFERLASIKNYHIRTGGLCNPGGVASALELQPWETRRNFSAGLRCGGETDIYAGKITGVIRVSLGAMSTMSDVDSFLSFVNEFFVDHTVVSADEDGESQKSVDMYVESLTIYPIKSCGGFEIPKETAWEVRPEGLAWDREWCLIHQGTGQALSQKRYPRMALIKPTIDFDLGLLKLRYQGSTFPTLVDEISVSLSSDPSSYKNPNNIHSLSSRVCGDAIAAQTYFDHEINDFFSKILEAPCVLARFPAGGSGPSLRHAKAHMQKHQGPKRSAAIEKSSAHSFHDPPTPPDSDSENRKRPILLSNESPILAINRSSINMLNEEIAKSGGKLASASVFRGNIVLASTELTDSHHPYSEDHWSTLQIGSETYQMLGSCRRCHMICVDQDTAEKNEEPFVTLAKTRRFESKVFFGSHMCHVPSFSRHKKHQFPVIKVGDKVSIGL.

N6-(pyridoxal phosphate)lysine is present on Lys-228. Cys-391 is a catalytic residue. A disordered region spans residues 625–670 (PSLRHAKAHMQKHQGPKRSAAIEKSSAHSFHDPPTPPDSDSENRKR). Residues 628-640 (RHAKAHMQKHQGP) are compositionally biased toward basic residues. Residues 648–812 (KSSAHSFHDP…IKVGDKVSIG (165 aa)) enclose the MOSC domain.

The protein belongs to the class-V pyridoxal-phosphate-dependent aminotransferase family. MOCOS subfamily. It depends on pyridoxal 5'-phosphate as a cofactor.

It carries out the reaction Mo-molybdopterin + L-cysteine + AH2 = thio-Mo-molybdopterin + L-alanine + A + H2O. Functionally, sulfurates the molybdenum cofactor. Sulfation of molybdenum is essential for xanthine dehydrogenase (XDH) and aldehyde oxidase (ADO) enzymes in which molybdenum cofactor is liganded by 1 oxygen and 1 sulfur atom in active form. The protein is Molybdenum cofactor sulfurase of Botryotinia fuckeliana (strain B05.10) (Noble rot fungus).